We begin with the raw amino-acid sequence, 715 residues long: MPAESGKRFKPSKYVPVSAAAIFLVGATTLFFAFTCPGLSLCVSPAVPIYNAIVFLFVLANFSMATFMDPGIFPRAEEDEDKEDDFRAPLYKTVEIKGIQVRMKWCATCRFYRPPRCSHCSVCDNCVEEFDHHCPWVNNCIGRRNYRYFFLFLLSLTAHIMGVFGFGLLYVLYHMEELSGVRTAVTMAVMCVAGLFFIPVAGLTGFHVVLVARGRTTNEQVTGKFRGGVNPFTNGCCNNVSRVLCSSPAPRYLGRPKKEKTIVIRPPFLRPEVSDGQITVKIMDNGIQGELRRSKSKGSLEVTESQSADAEPPPPPKPDLSRYTGLRTHLTLAANEDSSLLGKDSPPTPTMYKYRPGYSSSSTSAAMPHSSSAKLSRGDSLKEPTSIAESSRHPSYRSEPSLEPESFRSPTFGKSFHFDPLSSGSRSSSLKSAQGTGFELGQLQSIRSEGTTSTSYKSLANQTRNGSLSYDSLLTPSDSPDFESVQAGPEPDPPLGYTSPFLSARLAQQREAERHPRLVPTGPTHREPSPVRYDNLSRHIVASLQEREKLLRQSPPLPGREEEPGLGDSGIQSTPGSGHAPRTSSSSDDSKRSPLVKTPLGRPAAPRFGKPDGLRGRGLGSPEPGPTAPYLGRSMSYSSQKAPAGVSEAEEVALQPLLTPKDEVQLKTAYSKSNGQPKSIGSASPGPGQQPLSSPTRGGVKKVSGVGGTTYEISV.

The Cytoplasmic segment spans residues 1–13 (MPAESGKRFKPSK). The chain crosses the membrane as a helical span at residues 14-34 (YVPVSAAAIFLVGATTLFFAF). Residues 35–38 (TCPG) lie on the Extracellular side of the membrane. A helical membrane pass occupies residues 39 to 59 (LSLCVSPAVPIYNAIVFLFVL). The Cytoplasmic portion of the chain corresponds to 60–148 (ANFSMATFMD…NCIGRRNYRY (89 aa)). Y91 is subject to Phosphotyrosine. In terms of domain architecture, DHHC spans 104 to 154 (KWCATCRFYRPPRCSHCSVCDNCVEEFDHHCPWVNNCIGRRNYRYFFLFLL). C134 acts as the S-palmitoyl cysteine intermediate in catalysis. A helical transmembrane segment spans residues 149–169 (FFLFLLSLTAHIMGVFGFGLL). Over 170–191 (YVLYHMEELSGVRTAVTMAVMC) the chain is Extracellular. The chain crosses the membrane as a helical span at residues 192 to 212 (VAGLFFIPVAGLTGFHVVLVA). Over 213-715 (RGRTTNEQVT…VGGTTYEISV (503 aa)) the chain is Cytoplasmic. S247, S296, and S299 each carry phosphoserine. The disordered stretch occupies residues 289-648 (GELRRSKSKG…SQKAPAGVSE (360 aa)). T303 carries the phosphothreonine modification. S345 is subject to Phosphoserine. 2 positions are modified to phosphothreonine: T348 and T350. Over residues 359–373 (SSSSTSAAMPHSSSA) the composition is skewed to low complexity. A phosphoserine mark is found at S380, S398, S406, and S409. A Phosphothreonine modification is found at T411. Phosphoserine occurs at positions 415, 425, 429, and 432. Positions 422–432 (SSGSRSSSLKS) are enriched in low complexity. A Phosphothreonine modification is found at T436. The segment covering 442-478 (QLQSIRSEGTTSTSYKSLANQTRNGSLSYDSLLTPSD) has biased composition (polar residues). Residues S529 and S554 each carry the phosphoserine modification. At R617 the chain carries Omega-N-methylarginine. A Phosphoserine modification is found at S621. Phosphothreonine is present on T659. Positions 666–715 (LKTAYSKSNGQPKSIGSASPGPGQQPLSSPTRGGVKKVSGVGGTTYEISV) are disordered. A compositionally biased stretch (polar residues) spans 668–679 (TAYSKSNGQPKS). Residues 681 to 695 (GSASPGPGQQPLSSP) show a composition bias toward low complexity. A phosphoserine mark is found at S684 and S694. R697 is modified (omega-N-methylarginine).

The protein belongs to the DHHC palmitoyltransferase family. ERF2/ZDHHC9 subfamily. Post-translationally, phosphorylation regulates association with endocytic proteins and its subcellular localization. Phosphorylation by LYN during fatty acid uptake leads to inactivation of the activity. Autopalmitoylated. Palmitoylation of the C-terminal tail regulates stimulation-dependent plasma membrane motility.

It localises to the cell membrane. The catalysed reaction is L-cysteinyl-[protein] + hexadecanoyl-CoA = S-hexadecanoyl-L-cysteinyl-[protein] + CoA. Its function is as follows. Palmitoyltransferase that catalyzes the addition of palmitate onto various protein substrates such as CTNND2, CD36, GSDMD, NLRP3, NOD1, NOD2, STAT3 and S1PR1 thus plays a role in various biological processes including cell adhesion, inflammation, fatty acid uptake, bacterial sensing or cardiac functions. Plays an important role in the regulation of synapse efficacy by mediating palmitoylation of delta-catenin/CTNND2, thereby increasing synaptic delivery and surface stabilization of alpha-amino-3-hydroxy-5-methyl-4-isoxazole propionic acid receptors (AMPARs). Under basal conditions, remains at the synaptic membrane through FYN-mediated phosphorylation that prevents association with endocytic proteins. Neuronal activity enhances the internalization and trafficking of DHHC5 from spines to dendritic shafts where it palmitoylates delta-catenin/CTNND2. Regulates cell adhesion at the plasma membrane by palmitoylating GOLGA7B and DSG2. Plays a role in innate immune response by mediating the palmitoylation of NOD1 and NOD2 and their proper recruitment to the bacterial entry site and phagosomes. Also participates in fatty acid uptake by palmitoylating CD36 and thereby targeting it to the plasma membrane. Upon binding of fatty acids to CD36, gets phosphorylated by LYN leading to inactivation and subsequent CD36 caveolar endocytosis. Controls oligodendrocyte development by catalyzing STAT3 palmitoylation. Acts as a regulator of inflammatory response by mediating palmitoylation of NLRP3 and GSDMD. Palmitoylates NLRP3 to promote inflammasome assembly and activation. Activates pyroptosis by catalyzing palmitoylation of gasdermin-D (GSDMD), thereby promoting membrane translocation and pore formation of GSDMD. In Canis lupus familiaris (Dog), this protein is Palmitoyltransferase ZDHHC5 (ZDHHC5).